A 224-amino-acid chain; its full sequence is UPF0758 protein PBPRA0202 (224 aa).

The MPN domain occupies 102 to 224; that stretch reads VLTSPQHTRH…IVSFSEQGWL (123 aa). His173, His175, and Asp186 together coordinate Zn(2+). Residues 173-186 carry the JAMM motif motif; the sequence is HNHPSGVAEPSQSD.

It belongs to the UPF0758 family.

The polypeptide is UPF0758 protein PBPRA0202 (Photobacterium profundum (strain SS9)).